Consider the following 387-residue polypeptide: Patatin group J-1 (387 aa).

The N-terminal stretch at 1 to 23 (MATTKSFLILIVMILATTSSTFA) is a signal peptide. The region spanning 32–230 (LSIDGGGIKG…TVGDPALLSL (199 aa)) is the PNPLA domain. Positions 36-41 (GGGIKG) match the GXGXXG motif. Residues 75 to 79 (GTSTG) carry the GXSXG motif. Ser77 acts as the Nucleophile in catalysis. Asn115 carries an N-linked (GlcNAc...) asparagine glycan. The Proton acceptor role is filled by Asp216. A DGA/G motif is present at residues 216 to 218 (DGG). Positions 322-385 (ENALTGTTTE…NRKKLRANKA (64 aa)) form a coiled coil.

Belongs to the patatin family. As to expression, tuber.

The protein resides in the vacuole. Functionally, probable lipolytic acyl hydrolase (LAH), an activity which is thought to be involved in the response of tubers to pathogens. In Solanum tuberosum (Potato), this protein is Patatin group J-1.